The chain runs to 330 residues: DNA-directed RNA polymerase subunit alpha (330 aa).

The interval 1–231 (MQTNLLKPKT…EQLAVFAQLE (231 aa)) is alpha N-terminal domain (alpha-NTD). The segment at 250-330 (FDPILLRPVD…NWPPAGLDKR (81 aa)) is alpha C-terminal domain (alpha-CTD).

It belongs to the RNA polymerase alpha chain family. As to quaternary structure, homodimer. The RNAP catalytic core consists of 2 alpha, 1 beta, 1 beta' and 1 omega subunit. When a sigma factor is associated with the core the holoenzyme is formed, which can initiate transcription.

It catalyses the reaction RNA(n) + a ribonucleoside 5'-triphosphate = RNA(n+1) + diphosphate. Functionally, DNA-dependent RNA polymerase catalyzes the transcription of DNA into RNA using the four ribonucleoside triphosphates as substrates. This Paracidovorax citrulli (strain AAC00-1) (Acidovorax citrulli) protein is DNA-directed RNA polymerase subunit alpha.